We begin with the raw amino-acid sequence, 778 residues long: Tubulin polyglutamylase ttll6 (778 aa).

The interval 1-43 is disordered; it reads MGTPAERSVSEVCRCEPDPGLEGEGWGSDTHAEPSNTPIPLPV. The TTL domain maps to 51-393; it reads KKKLWINLTN…LGACDRRKIT (343 aa). ATP is bound by residues Lys168, 174-175, 196-199, and 209-211; these read QG, QVYM, and KFD. Gln174 contributes to the a protein binding site. Arg235 is a binding site for L-glutamate. 257–258 lines the ATP pocket; the sequence is TN. 2 residues coordinate L-glutamate: Tyr259 and Lys277. Residues Asp340, Glu353, and Asn355 each coordinate Mg(2+). Position 356 (His356) interacts with a protein. The segment at 365-445 is c-MTBD region; that stretch reads RLDREVKDSL…MGGFRRIFPR (81 aa). Lys371 provides a ligand contact to L-glutamate. Composition is skewed to basic and acidic residues over residues 402–418, 485–510, 533–542, and 760–778; these read ERLQQNRSREARNEEPR, KQEQKERDKKGSRKQDLQGESAGEKV, SVREETPVSL, and LSHDLRKAPRRVLPHEHSL. 3 disordered regions span residues 402–422, 485–542, and 758–778; these read ERLQQNRSREARNEEPRQSQA, KQEQ…PVSL, and PHLSHDLRKAPRRVLPHEHSL.

It belongs to the tubulin--tyrosine ligase family. The cofactor is Mg(2+).

The protein resides in the cytoplasm. It localises to the cytoskeleton. The protein localises to the cilium axoneme. Its subcellular location is the cilium basal body. It carries out the reaction L-glutamyl-[protein] + L-glutamate + ATP = gamma-L-glutamyl-L-glutamyl-[protein] + ADP + phosphate + H(+). It catalyses the reaction (L-glutamyl)(n)-gamma-L-glutamyl-L-glutamyl-[protein] + L-glutamate + ATP = (L-glutamyl)(n+1)-gamma-L-glutamyl-L-glutamyl-[protein] + ADP + phosphate + H(+). Functionally, polyglutamylase which modifies both tubulin and non-tubulin proteins, generating alpha-linked polyglutamate side chains on the gamma-carboxyl group of specific glutamate residues of target proteins. Preferentially mediates ATP-dependent long polyglutamate chain elongation over the initiation step of the polyglutamylation reaction. Preferentially modifies the alpha-tubulin tail over a beta-tail. Mediates microtubule polyglutamylation in cilia axoneme, which is important for ciliary structural formation and motility. Polyglutamylates olfactory cilia, necessary for the regulation of ciliary structure and beating. This is Tubulin polyglutamylase ttll6 from Danio rerio (Zebrafish).